The sequence spans 541 residues: Zinc finger protein 513 (541 aa).

The tract at residues 1-118 is disordered; that stretch reads MPRRKQSHPQ…GEARGERPGP (118 aa). A compositionally biased stretch (acidic residues) spans 44 to 55; it reads LEFEEEEEEDEG. 2 positions are modified to phosphoserine: Ser-85 and Ser-96. The segment covering 103–115 has biased composition (basic and acidic residues); that stretch reads EPARGPGEARGER. C2H2-type zinc fingers lie at residues 150–172, 178–200, 206–228, 360–382, 388–410, 416–438, 444–466, and 472–494; these read YSCR…MQTH, FRCG…TRTH, YRCP…QRTH, FACS…MKTH, FRCA…QRVH, YKCP…GRIH, FRCS…MLRH, and FRCA…QKVH. The segment at 492–541 is disordered; sequence KVHGHGGAGGPGLSAPEGWAPPHSPPSVLSTRGPAALGATGSRALHSDSP.

It belongs to the krueppel C2H2-type zinc-finger protein family. In terms of assembly, binds DNA. Can associate with the proximal promoter regions of PAX6 and SP4, and their known targets including ARR3, RHO, OPN1MW2 and OPN1SW. As to expression, widely expressed. In the eye, expression is greatest in the retina and least in the lens and cornea.

Its subcellular location is the nucleus. Its function is as follows. Transcriptional regulator that plays a role in retinal development and maintenance. This Mus musculus (Mouse) protein is Zinc finger protein 513 (Znf513).